We begin with the raw amino-acid sequence, 359 residues long: Peptide chain release factor 1 (359 aa).

An N5-methylglutamine modification is found at Q233.

The protein belongs to the prokaryotic/mitochondrial release factor family. Post-translationally, methylated by PrmC. Methylation increases the termination efficiency of RF1.

It is found in the cytoplasm. In terms of biological role, peptide chain release factor 1 directs the termination of translation in response to the peptide chain termination codons UAG and UAA. The sequence is that of Peptide chain release factor 1 from Cytophaga hutchinsonii (strain ATCC 33406 / DSM 1761 / CIP 103989 / NBRC 15051 / NCIMB 9469 / D465).